A 358-amino-acid polypeptide reads, in one-letter code: UDP-N-acetylglucosamine--N-acetylmuramyl-(pentapeptide) pyrophosphoryl-undecaprenol N-acetylglucosamine transferase (358 aa).

UDP-N-acetyl-alpha-D-glucosamine is bound by residues serine 196 and glutamine 287.

Belongs to the glycosyltransferase 28 family. MurG subfamily.

It localises to the cell membrane. It catalyses the reaction Mur2Ac(oyl-L-Ala-gamma-D-Glu-L-Lys-D-Ala-D-Ala)-di-trans,octa-cis-undecaprenyl diphosphate + UDP-N-acetyl-alpha-D-glucosamine = beta-D-GlcNAc-(1-&gt;4)-Mur2Ac(oyl-L-Ala-gamma-D-Glu-L-Lys-D-Ala-D-Ala)-di-trans,octa-cis-undecaprenyl diphosphate + UDP + H(+). It participates in cell wall biogenesis; peptidoglycan biosynthesis. Functionally, cell wall formation. Catalyzes the transfer of a GlcNAc subunit on undecaprenyl-pyrophosphoryl-MurNAc-pentapeptide (lipid intermediate I) to form undecaprenyl-pyrophosphoryl-MurNAc-(pentapeptide)GlcNAc (lipid intermediate II). In Streptococcus uberis (strain ATCC BAA-854 / 0140J), this protein is UDP-N-acetylglucosamine--N-acetylmuramyl-(pentapeptide) pyrophosphoryl-undecaprenol N-acetylglucosamine transferase.